The sequence spans 308 residues: Mitochondrial brown fat uncoupling protein 1 (308 aa).

At 1-10 the chain is on the mitochondrial intermembrane side; it reads MVASAEADVP. Residues 11–33 traverse the membrane as a helical segment; that stretch reads PPTMLVKIASAGLSACLADIITF. 3 Solcar repeats span residues 11–103, 112–202, and 211–296; these read PPTM…VQEY, ATLG…LKEA, and DDIP…LKKE. The Mitochondrial matrix portion of the chain corresponds to 34–74; that stretch reads PLDTAKVRLQVQGERPNAPGVKYKGVLGTIATVAKTEGPLK. Fatty acid 16:0 is bound at residue lysine 57. Residues 75 to 97 traverse the membrane as a helical segment; it reads LYGGLPAGIQRQISFASLRIGLY. Residues 98-117 lie on the Mitochondrial intermembrane side of the membrane; that stretch reads DTVQEYFNAHRKTPATLGNK. A helical membrane pass occupies residues 118-134; that stretch reads ISAGLMTGCVTVFIGQP. Topologically, residues 135–179 are mitochondrial matrix; the sequence is TEVAKVRMQAQSSLHWLKPRYSGTYNAYYVIVKTEGFLGLWKGTS. The helical transmembrane segment at 180 to 196 threads the bilayer; sequence LNLTRNVIINCTELVVY. The Mitochondrial intermembrane segment spans residues 197–213; it reads DVLKEALVKNNVLADDI. The helical transmembrane segment at 214–233 threads the bilayer; sequence PCHLLAALTAGFCTTALASP. Topologically, residues 234–267 are mitochondrial matrix; that stretch reads VDVVKTRFINSPPGYYPHVHNCALNMLQKEGLRA. A Cysteine sulfenic acid (-SOH) modification is found at cysteine 255. A helical membrane pass occupies residues 268 to 290; that stretch reads FFKGFVPSFLRLGSWTVIMHVTF. Residue lysine 270 coordinates fatty acid 16:0. Over 291–308 the chain is Mitochondrial intermembrane; it reads EQLKKELMKSRQTVDCAT.

The protein belongs to the mitochondrial carrier (TC 2.A.29) family. As to quaternary structure, most probably functions as a monomer. Binds one purine nucleotide per monomer. However, has also been suggested to function as a homodimer or a homotetramer. Tightly associates with cardiolipin in the mitochondrion inner membrane; may stabilize and regulate its activity. In terms of processing, may undergo sulfenylation upon cold exposure. May increase the sensitivity of UCP1 thermogenic function to the activation by noradrenaline probably through structural effects. Post-translationally, may undergo ubiquitin-mediated proteasomal degradation. As to expression, brown adipose tissue.

The protein localises to the mitochondrion inner membrane. The catalysed reaction is H(+)(in) = H(+)(out). Has no constitutive proton transporter activity and has to be activated by long-chain fatty acids/LCFAs. Inhibited by purine nucleotides. Both purine nucleotides and LCFAs bind the cytosolic side of the transporter and directly compete to activate or inhibit it. Activated by noradrenaline and reactive oxygen species. Despite lacking canonical translational encoding for selenocysteine, a small pool of the protein has been observed to selectively incorporate selenocysteine at 'Cys-255'. Selenocysteine-modified protein is highly sensitive to redox modification and may constitute a pool of protein highly sensitive to activation by elevated levels of reactive oxygen species (ROS). In terms of biological role, mitochondrial protein responsible for thermogenic respiration, a specialized capacity of brown adipose tissue and beige fat that participates in non-shivering adaptive thermogenesis to temperature and diet variations and more generally to the regulation of energy balance. Functions as a long-chain fatty acid/LCFA and proton symporter, simultaneously transporting one LCFA and one proton through the inner mitochondrial membrane. However, LCFAs remaining associated with the transporter via their hydrophobic tails, it results in an apparent transport of protons activated by LCFAs. Thereby, dissipates the mitochondrial proton gradient and converts the energy of substrate oxydation into heat instead of ATP. Regulates the production of reactive oxygen species/ROS by mitochondria. This is Mitochondrial brown fat uncoupling protein 1 from Suncus murinus (Asian house shrew).